The following is a 790-amino-acid chain: Cadherin-6 (790 aa).

Residues 1 to 18 (MRTYRYFLLLFWVGQPYP) form the signal peptide. A propeptide spanning residues 19 to 53 (TLSTPLSKRTSGFPAKKRALELSGNSKNELNRSKR) is cleaved from the precursor. N49 carries N-linked (GlcNAc...) asparagine glycosylation. Cadherin domains lie at 54–159 (SWMW…EPIF), 160–268 (TKEV…PPRF), 269–383 (PQST…PPVF), 384–486 (SKLA…DNAP), and 487–608 (EFAE…LIHP). Over 54-615 (SWMWNQFFLL…IHPTGLSTGA (562 aa)) the chain is Extracellular. Residue N255 is glycosylated (N-linked (GlcNAc...) asparagine). Residues 259–288 (TDVNDNPPRFPQSTYQFKTPESSPPGTPIG) are disordered. A compositionally biased stretch (polar residues) spans 269–279 (PQSTYQFKTPE). 4 N-linked (GlcNAc...) asparagine glycosylation sites follow: N399, N437, N455, and N536. The helical transmembrane segment at 616–636 (LVAILLCIVILLVTVVLFAAL) threads the bilayer. Residues 637–790 (RRQRKKEPLI…YGGVDSDKDS (154 aa)) lie on the Cytoplasmic side of the membrane. Phosphoserine occurs at positions 786 and 790.

As to expression, highly expressed in brain, cerebellum, and kidney. Lung, pancreas, and gastric mucosa show a weak expression. Also expressed in certain liver and kidney carcinomas.

It is found in the cell membrane. Its function is as follows. Cadherins are calcium-dependent cell adhesion proteins. They preferentially interact with themselves in a homophilic manner in connecting cells; cadherins may thus contribute to the sorting of heterogeneous cell types. The polypeptide is Cadherin-6 (CDH6) (Homo sapiens (Human)).